Consider the following 165-residue polypeptide: Putative 4-hydroxy-4-methyl-2-oxoglutarate aldolase (165 aa).

Substrate is bound by residues 80-83 and arginine 102; that span reads GGNL. An a divalent metal cation-binding site is contributed by aspartate 103.

Belongs to the class II aldolase/RraA-like family. Homotrimer. The cofactor is a divalent metal cation.

The catalysed reaction is 4-hydroxy-4-methyl-2-oxoglutarate = 2 pyruvate. The enzyme catalyses oxaloacetate + H(+) = pyruvate + CO2. In terms of biological role, catalyzes the aldol cleavage of 4-hydroxy-4-methyl-2-oxoglutarate (HMG) into 2 molecules of pyruvate. Also contains a secondary oxaloacetate (OAA) decarboxylase activity due to the common pyruvate enolate transition state formed following C-C bond cleavage in the retro-aldol and decarboxylation reactions. In Burkholderia mallei (strain NCTC 10247), this protein is Putative 4-hydroxy-4-methyl-2-oxoglutarate aldolase.